Here is a 323-residue protein sequence, read N- to C-terminus: Fructokinase-1 (323 aa).

Belongs to the carbohydrate kinase PfkB family. As to expression, expressed in stems, at higher levels in roots, and hardly detectable in leaves.

It catalyses the reaction D-fructose + ATP = D-fructose 6-phosphate + ADP + H(+). It functions in the pathway glycan biosynthesis; starch biosynthesis. Inhibited at high fructose. May play an important role in maintaining the flux of carbon towards starch formation in endosperm. May also be involved in a sugar-sensing pathway. The protein is Fructokinase-1 (FRK1) of Zea mays (Maize).